We begin with the raw amino-acid sequence, 631 residues long: Leucine aminopeptidase 2-2 (631 aa).

Substrate contacts are provided by residues 140–142 (QCQ) and 265–270 (PYGGME). Zn(2+) is bound at residue His294. The Proton acceptor role is filled by Glu295. Residues His298 and Glu317 each coordinate Zn(2+). The active-site Proton donor is Tyr395.

The protein belongs to the peptidase M1 family. It depends on Zn(2+) as a cofactor.

The protein resides in the cytoplasm. It localises to the nucleus. The catalysed reaction is an epoxide + H2O = an ethanediol. Functionally, aminopeptidase that preferentially cleaves di- and tripeptides. Also has low epoxide hydrolase activity (in vitro). Can hydrolyze the epoxide leukotriene LTA(4) but it forms preferentially 5,6-dihydroxy-7,9,11,14-eicosatetraenoic acid rather than the cytokine leukotriene B(4) as the product compared to the homologous mammalian enzyme (in vitro). This is Leucine aminopeptidase 2-2 from Meyerozyma guilliermondii (strain ATCC 6260 / CBS 566 / DSM 6381 / JCM 1539 / NBRC 10279 / NRRL Y-324) (Yeast).